The following is a 204-amino-acid chain: Putative F-box protein L168 (204 aa).

One can recognise an F-box domain in the interval 1–46 (MNLCDLFDEIIIGIIDELSDRDKIKFMTTCSRFYYFIDKTKYFDIY). The interval 161–184 (NETNKITNNHTNKKINNNKKHQNN) is disordered. Over residues 171–183 (TNKKINNNKKHQN) the composition is skewed to basic residues.

The protein is Putative F-box protein L168 of Acanthamoeba polyphaga (Amoeba).